Here is a 279-residue protein sequence, read N- to C-terminus: Large ribosomal subunit protein uL5c (279 aa).

2 disordered regions span residues 1–23 (MAAT…TASS) and 40–63 (LRVA…SPSG). Residues 1–43 (MAATAVTLPSSPAPFPVTTTASSSRNVRLLLRSPPPRRALRVA) constitute a chloroplast transit peptide. Over residues 41-50 (RVAASAAADA) the composition is skewed to low complexity. The segment covering 51 to 60 (PPKPAPPPTS) has biased composition (pro residues).

It belongs to the universal ribosomal protein uL5 family. Part of the 50S ribosomal subunit; contacts the 5S rRNA.

It localises to the plastid. The protein resides in the chloroplast. In terms of biological role, binds 5S rRNA, forms part of the central protuberance of the 50S subunit. The sequence is that of Large ribosomal subunit protein uL5c (RPL5) from Oryza sativa subsp. japonica (Rice).